A 271-amino-acid chain; its full sequence is Aquaporin-2 (271 aa).

Over 1–11 the chain is Cytoplasmic; that stretch reads MWELRSIAFSR. A helical membrane pass occupies residues 12–32; that stretch reads AVLAEFLATLLFVFFGLGSAL. The Extracellular portion of the chain corresponds to 33 to 40; the sequence is NWPQALPS. The helical transmembrane segment at 41-59 threads the bilayer; that stretch reads VLQIAMAFGLAIGTLVQAL. Residues 60-64 are Cytoplasmic-facing; the sequence is GHVSG. Positions 65 to 74 form an intramembrane region, discontinuously helical; it reads AHINPAVTVA. The NPA 1 motif lies at 68-70; that stretch reads NPA. Topologically, residues 75-85 are cytoplasmic; that stretch reads CLVGCHVSFLR. Residues 86–107 traverse the membrane as a helical segment; it reads AVFYVAAQLLGAVAGAALLHEI. Residues 108–127 are Extracellular-facing; it reads TPPAIRGDLAVNALNNNSTA. N-linked (GlcNAc...) asparagine glycosylation occurs at Asn-123. Residues 128–148 form a helical membrane-spanning segment; the sequence is GQAVTVELFLTLQLVLCIFAS. Over 149 to 156 the chain is Cytoplasmic; sequence TDERRGDN. A helical transmembrane segment spans residues 157–176; sequence VGTPALSIGFSVALGHLLGI. Topologically, residues 177–180 are extracellular; the sequence is HYTG. The discontinuously helical intramembrane region spans 181 to 193; it reads CSMNPARSLAPAI. Positions 184 to 186 match the NPA 2 motif; the sequence is NPA. The Extracellular portion of the chain corresponds to 194–201; the sequence is VTGKFDDH. Residues 202 to 222 traverse the membrane as a helical segment; it reads WVFWIGPLVGAIVASLLYNYV. At 223 to 271 the chain is on the cytoplasmic side; the sequence is LFPPAKSLSERLAVLKGLEPDTDWEEREVRRRQSVELHSPQSLPRGSKA. The interval 251–271 is disordered; sequence VRRRQSVELHSPQSLPRGSKA. Ser-256 is subject to Phosphoserine. Polar residues predominate over residues 261-271; the sequence is SPQSLPRGSKA.

It belongs to the MIP/aquaporin (TC 1.A.8) family. Homotetramer. Post-translationally, ser-256 phosphorylation is necessary and sufficient for expression at the apical membrane. Endocytosis is not phosphorylation-dependent. In terms of processing, N-glycosylated.

The protein localises to the apical cell membrane. Its subcellular location is the basolateral cell membrane. It is found in the cell membrane. It localises to the cytoplasmic vesicle membrane. The protein resides in the golgi apparatus. The protein localises to the trans-Golgi network membrane. It catalyses the reaction H2O(in) = H2O(out). The catalysed reaction is glycerol(in) = glycerol(out). Functionally, forms a water-specific channel that provides the plasma membranes of renal collecting duct with high permeability to water, thereby permitting water to move in the direction of an osmotic gradient. Could also be permeable to glycerol. This is Aquaporin-2 from Bos taurus (Bovine).